Reading from the N-terminus, the 223-residue chain is Uracil-DNA glycosylase (223 aa).

D67 serves as the catalytic Proton acceptor.

It belongs to the uracil-DNA glycosylase (UDG) superfamily. UNG family.

Its subcellular location is the cytoplasm. The enzyme catalyses Hydrolyzes single-stranded DNA or mismatched double-stranded DNA and polynucleotides, releasing free uracil.. In terms of biological role, excises uracil residues from the DNA which can arise as a result of misincorporation of dUMP residues by DNA polymerase or due to deamination of cytosine. The polypeptide is Uracil-DNA glycosylase (Borrelia duttonii (strain Ly)).